The sequence spans 469 residues: Serine hydroxymethyltransferase, cytosolic (469 aa).

A Phosphothreonine modification is found at T20. A Phosphoserine modification is found at S26. An N6-(pyridoxal phosphate)lysine modification is found at K248. Phosphoserine is present on S429. K456 participates in a covalent cross-link: Glycyl lysine isopeptide (Lys-Gly) (interchain with G-Cter in ubiquitin).

It belongs to the SHMT family. Homotetramer. Pyridoxal 5'-phosphate serves as cofactor.

The protein resides in the cytoplasm. The catalysed reaction is (6R)-5,10-methylene-5,6,7,8-tetrahydrofolate + glycine + H2O = (6S)-5,6,7,8-tetrahydrofolate + L-serine. It functions in the pathway one-carbon metabolism; tetrahydrofolate interconversion. In terms of biological role, interconversion of serine and glycine. This is Serine hydroxymethyltransferase, cytosolic from Saccharomyces cerevisiae (strain ATCC 204508 / S288c) (Baker's yeast).